The primary structure comprises 1590 residues: Pentafunctional AROM polypeptide (1590 aa).

Positions 1-400 are 3-dehydroquinate synthase; it reads MSTANGSSPT…HEPKASSVDD (400 aa). NAD(+)-binding positions include 49 to 51, 96 to 99, 127 to 129, and D132; these read DTN, EGSK, and GGV. 7-phospho-2-dehydro-3-deoxy-D-arabino-heptonate is bound at residue R143. 152 to 153 provides a ligand contact to NAD(+); it reads TT. 2 residues coordinate 7-phospho-2-dehydro-3-deoxy-D-arabino-heptonate: D159 and K165. K174 is a binding site for NAD(+). Position 175 (N175) interacts with 7-phospho-2-dehydro-3-deoxy-D-arabino-heptonate. NAD(+) contacts are provided by residues 192-195 and N203; that span reads FLNT. E207 contacts Zn(2+). Residues 207 to 210 and K266 each bind 7-phospho-2-dehydro-3-deoxy-D-arabino-heptonate; that span reads EVIK. E276 functions as the Proton acceptor; for 3-dehydroquinate synthase activity in the catalytic mechanism. Residues 280–284 and H287 each bind 7-phospho-2-dehydro-3-deoxy-D-arabino-heptonate; that span reads RNLLN. H287 serves as a coordination point for Zn(2+). H291 acts as the Proton acceptor; for 3-dehydroquinate synthase activity in catalysis. H303 and K372 together coordinate 7-phospho-2-dehydro-3-deoxy-D-arabino-heptonate. H303 is a Zn(2+) binding site. Residues 413-856 are EPSP synthase; the sequence is VQPGVRPGLK…WDVLSGVFGV (444 aa). The active-site For EPSP synthase activity is the C838. The shikimate kinase stretch occupies residues 876–1070; it reads NRSVFVIGMR…KAKPHSFFVS (195 aa). 883–890 contacts ATP; the sequence is GMRGAGKS. Residues 1071–1285 form a 3-dehydroquinase region; sequence LTVPNITAHT…AAPGQLTAAE (215 aa). The Proton acceptor; for 3-dehydroquinate dehydratase activity role is filled by H1187. K1215 serves as the catalytic Schiff-base intermediate with substrate; for 3-dehydroquinate dehydratase activity. Residues 1298–1590 are shikimate dehydrogenase; it reads KRKFYLFGKP…IVMNGTSDSS (293 aa).

The protein in the N-terminal section; belongs to the sugar phosphate cyclases superfamily. Dehydroquinate synthase family. In the 2nd section; belongs to the EPSP synthase family. This sequence in the 3rd section; belongs to the shikimate kinase family. It in the 4th section; belongs to the type-I 3-dehydroquinase family. The protein in the C-terminal section; belongs to the shikimate dehydrogenase family. Homodimer. Requires Zn(2+) as cofactor.

Its subcellular location is the cytoplasm. The catalysed reaction is 7-phospho-2-dehydro-3-deoxy-D-arabino-heptonate = 3-dehydroquinate + phosphate. It catalyses the reaction 3-dehydroquinate = 3-dehydroshikimate + H2O. The enzyme catalyses shikimate + NADP(+) = 3-dehydroshikimate + NADPH + H(+). It carries out the reaction shikimate + ATP = 3-phosphoshikimate + ADP + H(+). The catalysed reaction is 3-phosphoshikimate + phosphoenolpyruvate = 5-O-(1-carboxyvinyl)-3-phosphoshikimate + phosphate. Its pathway is metabolic intermediate biosynthesis; chorismate biosynthesis; chorismate from D-erythrose 4-phosphate and phosphoenolpyruvate: step 2/7. The protein operates within metabolic intermediate biosynthesis; chorismate biosynthesis; chorismate from D-erythrose 4-phosphate and phosphoenolpyruvate: step 3/7. It participates in metabolic intermediate biosynthesis; chorismate biosynthesis; chorismate from D-erythrose 4-phosphate and phosphoenolpyruvate: step 4/7. It functions in the pathway metabolic intermediate biosynthesis; chorismate biosynthesis; chorismate from D-erythrose 4-phosphate and phosphoenolpyruvate: step 5/7. Its pathway is metabolic intermediate biosynthesis; chorismate biosynthesis; chorismate from D-erythrose 4-phosphate and phosphoenolpyruvate: step 6/7. Functionally, the AROM polypeptide catalyzes 5 consecutive enzymatic reactions in prechorismate polyaromatic amino acid biosynthesis. In Pyricularia oryzae (strain 70-15 / ATCC MYA-4617 / FGSC 8958) (Rice blast fungus), this protein is Pentafunctional AROM polypeptide.